The following is a 188-amino-acid chain: Putative CC-type chemokine FPV060 (188 aa).

Belongs to the intercrine beta (chemokine CC) family. Highly divergent.

The chain is Putative CC-type chemokine FPV060 from Fowlpox virus (strain NVSL) (FPV).